The primary structure comprises 554 residues: CTP synthase (554 aa).

An amidoligase domain region spans residues 1 to 265; it reads MTPLIFVTGG…DEIVVNQLKL (265 aa). Ser13 serves as a coordination point for CTP. Position 13 (Ser13) interacts with UTP. 14-19 is an ATP binding site; sequence SLGKGI. Residues Asp71 and Glu139 each coordinate Mg(2+). CTP is bound by residues 146–148, 186–191, and Lys222; these read DIE and KTKPTQ. UTP contacts are provided by residues 186-191 and Lys222; that span reads KTKPTQ. Residues 292–545 enclose the Glutamine amidotransferase type-1 domain; that stretch reads TIAVVGKYVD…IRAARERKAG (254 aa). L-glutamine is bound at residue Gly353. Catalysis depends on Cys380, which acts as the Nucleophile; for glutamine hydrolysis. L-glutamine-binding positions include 381–384, Glu404, and Arg471; that span reads YGMQ. Active-site residues include His518 and Glu520.

The protein belongs to the CTP synthase family. Homotetramer.

The enzyme catalyses UTP + L-glutamine + ATP + H2O = CTP + L-glutamate + ADP + phosphate + 2 H(+). It catalyses the reaction L-glutamine + H2O = L-glutamate + NH4(+). It carries out the reaction UTP + NH4(+) + ATP = CTP + ADP + phosphate + 2 H(+). Its pathway is pyrimidine metabolism; CTP biosynthesis via de novo pathway; CTP from UDP: step 2/2. Its activity is regulated as follows. Allosterically activated by GTP, when glutamine is the substrate; GTP has no effect on the reaction when ammonia is the substrate. The allosteric effector GTP functions by stabilizing the protein conformation that binds the tetrahedral intermediate(s) formed during glutamine hydrolysis. Inhibited by the product CTP, via allosteric rather than competitive inhibition. In terms of biological role, catalyzes the ATP-dependent amination of UTP to CTP with either L-glutamine or ammonia as the source of nitrogen. Regulates intracellular CTP levels through interactions with the four ribonucleotide triphosphates. This Stenotrophomonas maltophilia (strain K279a) protein is CTP synthase.